A 337-amino-acid polypeptide reads, in one-letter code: Glyceraldehyde-3-phosphate dehydrogenase (337 aa).

NAD(+) is bound by residues 13 to 14, D35, and K80; that span reads RI. D-glyceraldehyde 3-phosphate-binding positions include 151 to 153, T182, 211 to 212, and R234; these read SCT and TG. C152 functions as the Nucleophile in the catalytic mechanism. N316 is an NAD(+) binding site.

The protein belongs to the glyceraldehyde-3-phosphate dehydrogenase family. In terms of assembly, homotetramer.

It localises to the cytoplasm. It catalyses the reaction D-glyceraldehyde 3-phosphate + phosphate + NAD(+) = (2R)-3-phospho-glyceroyl phosphate + NADH + H(+). It participates in carbohydrate degradation; glycolysis; pyruvate from D-glyceraldehyde 3-phosphate: step 1/5. This Mycosarcoma maydis (Corn smut fungus) protein is Glyceraldehyde-3-phosphate dehydrogenase (GAPD).